The following is a 182-amino-acid chain: Adenine phosphoribosyltransferase (182 aa).

It belongs to the purine/pyrimidine phosphoribosyltransferase family. Homodimer.

It localises to the cytoplasm. The enzyme catalyses AMP + diphosphate = 5-phospho-alpha-D-ribose 1-diphosphate + adenine. Its pathway is purine metabolism; AMP biosynthesis via salvage pathway; AMP from adenine: step 1/1. Its function is as follows. Catalyzes a salvage reaction resulting in the formation of AMP, that is energically less costly than de novo synthesis. This chain is Adenine phosphoribosyltransferase, found in Pseudomonas fluorescens (strain SBW25).